A 260-amino-acid polypeptide reads, in one-letter code: Thiazole synthase (260 aa).

The Schiff-base intermediate with DXP role is filled by K96. 1-deoxy-D-xylulose 5-phosphate contacts are provided by residues G157, 184-185 (AG), and 206-207 (NT).

The protein belongs to the ThiG family. As to quaternary structure, homotetramer. Forms heterodimers with either ThiH or ThiS.

The protein localises to the cytoplasm. It carries out the reaction [ThiS sulfur-carrier protein]-C-terminal-Gly-aminoethanethioate + 2-iminoacetate + 1-deoxy-D-xylulose 5-phosphate = [ThiS sulfur-carrier protein]-C-terminal Gly-Gly + 2-[(2R,5Z)-2-carboxy-4-methylthiazol-5(2H)-ylidene]ethyl phosphate + 2 H2O + H(+). The protein operates within cofactor biosynthesis; thiamine diphosphate biosynthesis. Functionally, catalyzes the rearrangement of 1-deoxy-D-xylulose 5-phosphate (DXP) to produce the thiazole phosphate moiety of thiamine. Sulfur is provided by the thiocarboxylate moiety of the carrier protein ThiS. In vitro, sulfur can be provided by H(2)S. The sequence is that of Thiazole synthase from Nitrobacter hamburgensis (strain DSM 10229 / NCIMB 13809 / X14).